The sequence spans 165 residues: NADPH-dependent 7-cyano-7-deazaguanine reductase (165 aa).

The active-site Thioimide intermediate is Cys-56. Catalysis depends on Asp-63, which acts as the Proton donor. Residues 78–80 (VES) and 97–98 (HE) contribute to the substrate site.

The protein belongs to the GTP cyclohydrolase I family. QueF type 1 subfamily.

It is found in the cytoplasm. The catalysed reaction is 7-aminomethyl-7-carbaguanine + 2 NADP(+) = 7-cyano-7-deazaguanine + 2 NADPH + 3 H(+). It participates in tRNA modification; tRNA-queuosine biosynthesis. Its function is as follows. Catalyzes the NADPH-dependent reduction of 7-cyano-7-deazaguanine (preQ0) to 7-aminomethyl-7-deazaguanine (preQ1). This chain is NADPH-dependent 7-cyano-7-deazaguanine reductase, found in Bacillus pumilus (strain SAFR-032).